The chain runs to 176 residues: Transcriptional repressor NrdR (176 aa).

Residues 3–34 (CPFCQHTDSRVLESRSAEAGQSVRRRRECLQC) fold into a zinc finger. The 91-residue stretch at 49–139 (ITVIKRNQDR…VYRQFRGIRD (91 aa)) folds into the ATP-cone domain. Residues 151–176 (GDGPLPSVLDEPYEDTAQPTIMISPQ) are disordered. A compositionally biased stretch (polar residues) spans 167 to 176 (AQPTIMISPQ).

This sequence belongs to the NrdR family. Zn(2+) is required as a cofactor.

Its function is as follows. Negatively regulates transcription of bacterial ribonucleotide reductase nrd genes and operons by binding to NrdR-boxes. This Acaryochloris marina (strain MBIC 11017) protein is Transcriptional repressor NrdR.